The sequence spans 150 residues: UPF0178 protein Shewmr4_1560 (150 aa).

Belongs to the UPF0178 family.

The chain is UPF0178 protein Shewmr4_1560 from Shewanella sp. (strain MR-4).